We begin with the raw amino-acid sequence, 751 residues long: MAFRTICVLVGVFICSICVKGSSQPQARVYLTFDELRETKTSEYFSLSHHPLDYRILLMDEDQDRIYVGSKDHILSLNINNISQEALSVFWPASTIKVEECKMAGKDPTHGCGNFVRVIQTFNRTHLYVCGSGAFSPVCTYLNRGRRSEDQVFMIDSKCESGKGRCSFNPNVNTVSVMINEELFSGMYIDFMGTDAAIFRSLTKRNAVRTDQHNSKWLSEPMFVDAHVIPDGTDPNDAKVYFFFKEKLTDNNRSTKQIHSMIARICPNDTGGLRSLVNKWTTFLKARLVCSVTDEDGPETHFDELEDVFLLETDNPRTTLVYGIFTTSSSVFKGSAVCVYHLSDIQTVFNGPFAHKEGPNHQLISYQGRIPYPRPGTCPGGAFTPNMRTTKEFPDDVVTFIRNHPLMYNSIYPIHKRPLIVRIGTDYKYTKIAVDRVNAADGRYHVLFLGTDRGTVQKVVVLPTNNSVSGELILEELEVFKNHAPITTMKISSKKQQLYVSSNEGVSQVSLHRCHIYGTACADCCLARDPYCAWDGHSCSRFYPTGKRRSRRQDVRHGNPLTQCRGFNLKAYRNAAEIVQYGVKNNTTFLECAPKSPQASIKWLLQKDKDRRKEVKLNERIIATSQGLLIRSVQGSDQGLYHCIATENSFKQTIAKINFKVLDSEMVAVVTDKWSPWTWASSVRALPFHPKDIMGAFSHSEMQMINQYCKDTRQQHQQGDESQKMRGDYGKLKALINSRKSRNRRNQLPES.

The N-terminal stretch at 1 to 20 (MAFRTICVLVGVFICSICVK) is a signal peptide. The 484-residue stretch at 28–511 (RVYLTFDELR…SNEGVSQVSL (484 aa)) folds into the Sema domain. Residue asparagine 81 is glycosylated (N-linked (GlcNAc...) asparagine). Cysteines 101 and 112 form a disulfide. The N-linked (GlcNAc...) asparagine glycan is linked to asparagine 123. A disulfide bond links cysteine 130 and cysteine 139. Asparagine 252 and asparagine 268 each carry an N-linked (GlcNAc...) asparagine glycan. Disulfide bonds link cysteine 266–cysteine 378 and cysteine 290–cysteine 338. An N-linked (GlcNAc...) asparagine glycan is attached at asparagine 465. A disulfide bond links cysteine 514 and cysteine 532. The Ig-like C2-type domain occupies 571–655 (AYRNAAEIVQ…TENSFKQTIA (85 aa)). Asparagine 585 and asparagine 586 each carry an N-linked (GlcNAc...) asparagine glycan. Cysteine 643 and cysteine 709 form a disulfide bridge. Over residues 712–731 (TRQQHQQGDESQKMRGDYGK) the composition is skewed to basic and acidic residues. A disordered region spans residues 712–751 (TRQQHQQGDESQKMRGDYGKLKALINSRKSRNRRNQLPES).

The protein belongs to the semaphorin family. Interacts with PLXND1. Expressed intensely in the heart, skeletal muscle, colon, small intestine, ovary, testis, and prostate. Faint expression ubiquitously among other organs, including brain.

The protein resides in the secreted. Functionally, binds to plexin family members and plays an important role in the regulation of developmental processes. Required for normal cardiovascular development during embryogenesis. Functions as attractant for growing axons, and thereby plays an important role in axon growth and axon guidance. The chain is Semaphorin-3C (SEMA3C) from Homo sapiens (Human).